The primary structure comprises 308 residues: tRNA dimethylallyltransferase (308 aa).

Residue Gly-16–Thr-23 coordinates ATP. Substrate is bound at residue Thr-18–Thr-23. The tract at residues Asp-41–Gln-44 is interaction with substrate tRNA.

Belongs to the IPP transferase family. In terms of assembly, monomer. It depends on Mg(2+) as a cofactor.

The catalysed reaction is adenosine(37) in tRNA + dimethylallyl diphosphate = N(6)-dimethylallyladenosine(37) in tRNA + diphosphate. In terms of biological role, catalyzes the transfer of a dimethylallyl group onto the adenine at position 37 in tRNAs that read codons beginning with uridine, leading to the formation of N6-(dimethylallyl)adenosine (i(6)A). The chain is tRNA dimethylallyltransferase from Myxococcus xanthus (strain DK1622).